The chain runs to 368 residues: Cyclic GMP-AMP synthase-like receptor (368 aa).

ATP contacts are provided by residues serine 60 and 72-74 (EYD). Mg(2+) is bound by residues glutamate 72, aspartate 74, and aspartate 190. GTP-binding positions include aspartate 190 and 229 to 236 (RASFYRQE). Residues 233-236 (YRQE), lysine 254, and 268-272 (SYFIK) contribute to the ATP site.

It belongs to the mab-21 family. Mg(2+) is required as a cofactor. It depends on Mn(2+) as a cofactor.

It carries out the reaction GTP + ATP = 3',2'-cGAMP + 2 diphosphate. The catalysed reaction is GTP + ATP = pppA(2'-5')pG + diphosphate. The enzyme catalyses pppA(2'-5')pG = 3',2'-cGAMP + diphosphate. Its activity is regulated as follows. The enzyme activity is specifically activated by double-stranded RNA (dsRNA). Nucleotidyltransferase that catalyzes the formation of cyclic GMP-AMP (3',2'-cGAMP) from ATP and GTP and plays a key role in innate immunity. Synthesizes 3',2'-cGAMP in a two-step reaction through production of the linear intermediate pppA(2'-5')pG. Acts as a key sensor of double-stranded RNA (dsRNA), the presence of dsRNA in the cytoplasm being a danger signal that triggers the immune responses. Directly binds dsRNA, activating the nucleotidyltransferase activity, leading to synthesis of 3',2'-cGAMP, a second messenger that binds to and activates Sting, thereby triggering the antiviral immune response via activation of the NF-kappa-B transcription factor Rel (Relish). This Lucilia cuprina (Green bottle fly) protein is Cyclic GMP-AMP synthase-like receptor.